The chain runs to 242 residues: 4-hydroxy-tetrahydrodipicolinate reductase (242 aa).

Residues 79-81 (ATT) and 103-106 (SANM) contribute to the NAD(+) site. Histidine 135 acts as the Proton donor/acceptor in catalysis. Histidine 136 serves as a coordination point for (S)-2,3,4,5-tetrahydrodipicolinate. Catalysis depends on lysine 139, which acts as the Proton donor. Residue 145–146 (GT) coordinates (S)-2,3,4,5-tetrahydrodipicolinate.

This sequence belongs to the DapB family.

The protein localises to the cytoplasm. The catalysed reaction is (S)-2,3,4,5-tetrahydrodipicolinate + NAD(+) + H2O = (2S,4S)-4-hydroxy-2,3,4,5-tetrahydrodipicolinate + NADH + H(+). It catalyses the reaction (S)-2,3,4,5-tetrahydrodipicolinate + NADP(+) + H2O = (2S,4S)-4-hydroxy-2,3,4,5-tetrahydrodipicolinate + NADPH + H(+). Its pathway is amino-acid biosynthesis; L-lysine biosynthesis via DAP pathway; (S)-tetrahydrodipicolinate from L-aspartate: step 4/4. Catalyzes the conversion of 4-hydroxy-tetrahydrodipicolinate (HTPA) to tetrahydrodipicolinate. In Staphylococcus carnosus (strain TM300), this protein is 4-hydroxy-tetrahydrodipicolinate reductase.